The primary structure comprises 297 residues: Acetaldehyde dehydrogenase (297 aa).

Cys128 (acyl-thioester intermediate) is an active-site residue. NAD(+)-binding positions include 159–167 (SAGPGTRQN) and Asn272.

This sequence belongs to the acetaldehyde dehydrogenase family.

It carries out the reaction acetaldehyde + NAD(+) + CoA = acetyl-CoA + NADH + H(+). This Desulfitobacterium hafniense (strain DSM 10664 / DCB-2) protein is Acetaldehyde dehydrogenase.